Here is a 214-residue protein sequence, read N- to C-terminus: Cytochrome b (214 aa).

Helical transmembrane passes span Phe-31–Phe-51, Trp-75–Ile-96, Trp-111–Leu-131, and Phe-176–Leu-196. The heme b site is built by His-81 and His-95. Heme b contacts are provided by His-180 and His-194. His-199 is a binding site for a ubiquinone.

Belongs to the cytochrome b family. As to quaternary structure, the cytochrome bc1 complex contains 3 respiratory subunits (MT-CYB, CYC1 and UQCRFS1), 2 core proteins (UQCRC1 and UQCRC2) and probably 6 low-molecular weight proteins. Requires heme b as cofactor.

It is found in the mitochondrion inner membrane. Functionally, component of the ubiquinol-cytochrome c reductase complex (complex III or cytochrome b-c1 complex) that is part of the mitochondrial respiratory chain. The b-c1 complex mediates electron transfer from ubiquinol to cytochrome c. Contributes to the generation of a proton gradient across the mitochondrial membrane that is then used for ATP synthesis. The polypeptide is Cytochrome b (MT-CYB) (Gloydius blomhoffii (Mamushi)).